The primary structure comprises 302 residues: Protoheme IX farnesyltransferase (302 aa).

The next 9 membrane-spanning stretches (helical) occupy residues leucine 28 to proline 48, methionine 50 to methionine 70, leucine 93 to alanine 115, tyrosine 119 to leucine 138, isoleucine 147 to glycine 167, glycine 172 to glycine 192, leucine 219 to glycine 239, phenylalanine 242 to phenylalanine 262, and alanine 271 to leucine 291.

This sequence belongs to the UbiA prenyltransferase family. Protoheme IX farnesyltransferase subfamily.

The protein resides in the cell membrane. The enzyme catalyses heme b + (2E,6E)-farnesyl diphosphate + H2O = Fe(II)-heme o + diphosphate. It functions in the pathway porphyrin-containing compound metabolism; heme O biosynthesis; heme O from protoheme: step 1/1. In terms of biological role, converts heme B (protoheme IX) to heme O by substitution of the vinyl group on carbon 2 of heme B porphyrin ring with a hydroxyethyl farnesyl side group. This chain is Protoheme IX farnesyltransferase, found in Aeropyrum pernix (strain ATCC 700893 / DSM 11879 / JCM 9820 / NBRC 100138 / K1).